Reading from the N-terminus, the 155-residue chain is Large ribosomal subunit protein uL30 (155 aa).

This sequence belongs to the universal ribosomal protein uL30 family. As to quaternary structure, part of the 50S ribosomal subunit.

The polypeptide is Large ribosomal subunit protein uL30 (Cenarchaeum symbiosum (strain A)).